The following is a 779-amino-acid chain: Chloride channel protein CLC-c (779 aa).

The residue at position 27 (serine 27) is a Phosphoserine. 12 helical membrane passes run 92–112 (TFLKWALAFLIGLATGLVGFL), 142–162 (FAFAGCNLILATAAASLCAFI), 190–210 (STLFVKIFGSIFGVAAGFVVG), 215–235 (MVHTGACIANLLGQGGSKKYR), 257–277 (GAAAGVAAAFRAPVGGVLFAL), 287–307 (ALLWRTFFTTAVVAVVLRSLI), 341–361 (LAIVFLGVIGGVLGSLYNYLV), 380–400 (IMLVMAVSILSSCCAFGLPWL), 466–486 (LAIFFVAVYCLGIITYGIAIP), 488–508 (GLFIPVILAGASYGRLVGRLL), 520–540 (SLLGAASFLGGTMRMTVSLCV), and 541–561 (ILLELTNNLLMLPLVMLVLLI). In terms of domain architecture, CBS 1 spans 601–659 (DVVSGALISFSRVEKVGVIWQALKMTRHNGFPVIDEPPFTEASELCGIALRSHLLVLLQ). Serine 672 is subject to Phosphoserine. Positions 713-777 (ITNTSPYTVL…VLGLYPHIDP (65 aa)) constitute a CBS 2 domain. A helical membrane pass occupies residues 741 to 761 (HLCVVPKTPGRPPIVGILTRH).

This sequence belongs to the chloride channel (TC 2.A.49) family. In terms of assembly, homodimer. Interacts with PP2A5. In terms of tissue distribution, broadly expressed in the plant.

It is found in the membrane. Functionally, voltage-gated chloride channel. This chain is Chloride channel protein CLC-c (CLC-C), found in Arabidopsis thaliana (Mouse-ear cress).